A 349-amino-acid polypeptide reads, in one-letter code: Cobalt-precorrin-5B C(1)-methyltransferase (349 aa).

It belongs to the CbiD family.

The catalysed reaction is Co-precorrin-5B + S-adenosyl-L-methionine = Co-precorrin-6A + S-adenosyl-L-homocysteine. The protein operates within cofactor biosynthesis; adenosylcobalamin biosynthesis; cob(II)yrinate a,c-diamide from sirohydrochlorin (anaerobic route): step 6/10. In terms of biological role, catalyzes the methylation of C-1 in cobalt-precorrin-5B to form cobalt-precorrin-6A. This Saccharolobus islandicus (strain L.S.2.15 / Lassen #1) (Sulfolobus islandicus) protein is Cobalt-precorrin-5B C(1)-methyltransferase.